A 1172-amino-acid chain; its full sequence is NACHT, LRR and PYD domains-containing protein 1b allele 3 (1172 aa).

The tract at residues 1 to 22 is disordered; that stretch reads MEESPPKQKSNTKVAQHEGQQD. The region spanning 126-435 is the NACHT domain; the sequence is QLVIIEGAAG…EFFAAISCIL (310 aa). Residue 132 to 139 coordinates ATP; that stretch reads GAAGIGKS. LRR repeat units lie at residues 627–647 and 684–704; these read NLEG…QSLC and SLTE…RMLC. The segment at 789–922 is ZU5; sequence FWGPTGPVAT…GYTVLKNPSF (134 aa). An FIIND domain is found at 789 to 1072; sequence FWGPTGPVAT…LRPALPRIAQ (284 aa). Positions 923-1072 are UPA; that stretch reads SPMGDVLRII…LRPALPRIAQ (150 aa). The 84-residue stretch at 1082–1165 folds into the CARD domain; it reads HFMDQHREQL…HLVMDLLEKS (84 aa).

This sequence belongs to the NLRP family. In terms of processing, in contrast to allele 1 and 2, not able to mediate autocatalytic cleavage. In terms of tissue distribution, expressed in macrophages.

Its subcellular location is the cytoplasm. It is found in the cytosol. In contrast to allele 1, does not undergo autocatalytic cleavage within the FIIND domain and its mode of activation remains unclear. In contrast to alleles 1 and 2, allele 3 is not activated by Val-boroPro (Talabostat, PT-100). Not activated by cleavage by B.anthracis lethal toxin (LT) endopeptidase. Not activated by metabolic inhibitors, such as 2-deoxy-D-glucose and sodium azide. In terms of biological role, may act as the sensor component of the Nlrp1b inflammasome, which mediates inflammasome activation in response to various pathogen-associated signals, leading to subsequent pyroptosis. Inflammasomes are supramolecular complexes that assemble in the cytosol in response to pathogens and other damage-associated signals and play critical roles in innate immunity and inflammation. May act as a recognition receptor (PRR), which recognizes specific pathogens and other damage-associated signals and forms an inflammasome complex: the inflammasome directly recruits pro-caspase-1 (proCASP1) independently of PYCARD/ASC and promotes caspase-1 (CASP1) activation, which subsequently cleaves and activates inflammatory cytokines IL1B and IL18 and gasdermin-D (GSDMD), leading to pyroptosis. In the absence of GSDMD expression, the Nlrp1b inflammasome is able to recruit and activate CASP8, leading to activation of gasdermin-E (GSDME). Contrary to Nlrp1b allele 1, allele 3 is not activated by Bacillus anthracis lethal toxin. The absence of autocatalytic cleavage within the FIIND domain, which regulates activation in other alleles, suggests that allele 3 may be non-functional. This is NACHT, LRR and PYD domains-containing protein 1b allele 3 from Mus musculus (Mouse).